The chain runs to 250 residues: 5-oxoprolinase subunit A (250 aa).

The protein belongs to the LamB/PxpA family. As to quaternary structure, forms a complex composed of PxpA, PxpB and PxpC.

It catalyses the reaction 5-oxo-L-proline + ATP + 2 H2O = L-glutamate + ADP + phosphate + H(+). Catalyzes the cleavage of 5-oxoproline to form L-glutamate coupled to the hydrolysis of ATP to ADP and inorganic phosphate. This Chromohalobacter salexigens (strain ATCC BAA-138 / DSM 3043 / CIP 106854 / NCIMB 13768 / 1H11) protein is 5-oxoprolinase subunit A.